A 608-amino-acid polypeptide reads, in one-letter code: Glutamyl-tRNA(Gln) amidotransferase subunit E (608 aa).

This sequence belongs to the GatB/GatE family. GatE subfamily. In terms of assembly, heterodimer of GatD and GatE.

The catalysed reaction is L-glutamyl-tRNA(Gln) + L-glutamine + ATP + H2O = L-glutaminyl-tRNA(Gln) + L-glutamate + ADP + phosphate + H(+). Allows the formation of correctly charged Gln-tRNA(Gln) through the transamidation of misacylated Glu-tRNA(Gln) in organisms which lack glutaminyl-tRNA synthetase. The reaction takes place in the presence of glutamine and ATP through an activated gamma-phospho-Glu-tRNA(Gln). The GatDE system is specific for glutamate and does not act on aspartate. In Pyrobaculum aerophilum (strain ATCC 51768 / DSM 7523 / JCM 9630 / CIP 104966 / NBRC 100827 / IM2), this protein is Glutamyl-tRNA(Gln) amidotransferase subunit E.